The chain runs to 422 residues: UDP-N-acetylglucosamine 1-carboxyvinyltransferase (422 aa).

22 to 23 (KN) lines the phosphoenolpyruvate pocket. UDP-N-acetyl-alpha-D-glucosamine is bound at residue Arg-93. Cys-117 functions as the Proton donor in the catalytic mechanism. Cys-117 bears the 2-(S-cysteinyl)pyruvic acid O-phosphothioketal mark. Residues 122-126 (RPVDQ), Asp-305, and Ile-327 each bind UDP-N-acetyl-alpha-D-glucosamine.

This sequence belongs to the EPSP synthase family. MurA subfamily.

It localises to the cytoplasm. The catalysed reaction is phosphoenolpyruvate + UDP-N-acetyl-alpha-D-glucosamine = UDP-N-acetyl-3-O-(1-carboxyvinyl)-alpha-D-glucosamine + phosphate. Its pathway is cell wall biogenesis; peptidoglycan biosynthesis. In terms of biological role, cell wall formation. Adds enolpyruvyl to UDP-N-acetylglucosamine. This Bordetella petrii (strain ATCC BAA-461 / DSM 12804 / CCUG 43448) protein is UDP-N-acetylglucosamine 1-carboxyvinyltransferase.